A 284-amino-acid polypeptide reads, in one-letter code: UPF0294 protein VV1_1880 (284 aa).

The protein belongs to the UPF0294 family.

The protein resides in the cytoplasm. This is UPF0294 protein VV1_1880 from Vibrio vulnificus (strain CMCP6).